The sequence spans 194 residues: Fe/S biogenesis protein NfuA (194 aa).

Residues C152 and C155 each contribute to the [4Fe-4S] cluster site.

This sequence belongs to the NfuA family. Homodimer. Requires [4Fe-4S] cluster as cofactor.

Its function is as follows. Involved in iron-sulfur cluster biogenesis. Binds a 4Fe-4S cluster, can transfer this cluster to apoproteins, and thereby intervenes in the maturation of Fe/S proteins. Could also act as a scaffold/chaperone for damaged Fe/S proteins. This is Fe/S biogenesis protein NfuA from Pseudomonas putida (strain GB-1).